A 431-amino-acid chain; its full sequence is Levansucrase LscC (431 aa).

Sucrose-binding residues include Trp61, Asp62, Ala148, Arg218, and Asp219. Asp62 functions as the Nucleophile in the catalytic mechanism. Glu303 acts as the Proton donor/acceptor in catalysis.

This sequence belongs to the glycosyl hydrolase 68 family.

Its subcellular location is the periplasm. It carries out the reaction [6)-beta-D-fructofuranosyl-(2-&gt;](n) alpha-D-glucopyranoside + sucrose = [6)-beta-D-fructofuranosyl-(2-&gt;](n+1) alpha-D-glucopyranoside + D-glucose. Functionally, catalyzes the synthesis of levan, a fructose polymer, by transferring the fructosyl moiety from sucrose to a growing acceptor molecule. This Pseudomonas savastanoi pv. glycinea (Pseudomonas syringae pv. glycinea) protein is Levansucrase LscC.